Here is a 321-residue protein sequence, read N- to C-terminus: Glycerol-3-phosphate dehydrogenase [NAD(P)+] (321 aa).

Positions 10, 11, 31, 32, and 104 each coordinate NADPH. The sn-glycerol 3-phosphate site is built by K104 and G132. A136 provides a ligand contact to NADPH. Sn-glycerol 3-phosphate-binding residues include K186, D238, S248, R249, and N250. Residue K186 is the Proton acceptor of the active site. R249 is an NADPH binding site. Residue E272 participates in NADPH binding.

It belongs to the NAD-dependent glycerol-3-phosphate dehydrogenase family.

Its subcellular location is the cytoplasm. It catalyses the reaction sn-glycerol 3-phosphate + NAD(+) = dihydroxyacetone phosphate + NADH + H(+). It carries out the reaction sn-glycerol 3-phosphate + NADP(+) = dihydroxyacetone phosphate + NADPH + H(+). Functionally, catalyzes the reduction of the glycolytic intermediate dihydroxyacetone phosphate (DHAP) to sn-glycerol 3-phosphate (G3P). The sequence is that of Glycerol-3-phosphate dehydrogenase [NAD(P)+] from Methanothermobacter thermautotrophicus (strain ATCC 29096 / DSM 1053 / JCM 10044 / NBRC 100330 / Delta H) (Methanobacterium thermoautotrophicum).